The chain runs to 461 residues: MKKILVVGDLIADYYLWGKSERLSPEAPVPVLEVQKENKNLGGAANVANNLISLKAKVFLCGVVGDDLEGKHFLNALKARNIDTSGILTDKTRCTTLKTRIIAQNQQIVRVDKEIKDPLNADLRKRLLDFFTEKIQEIDGVILSDYNKGVLDFELTQTMIALANQHHKLILCDPKGKDYSKYSHASLITPNRAELEHALHLKLDSHANLSKALQILKETYQIAMPLVTLSEQGIAFLEKGELVNCPTIAKEVYDVTGAGDTVIASLTLSLLELMSLKDACEFANAAAAVVVGKMGSALASLEEIALILNQTHPKILPLEKLLETLDQQKIVFTNGCFDLLHKGHASYLQKAKALGDILIVGLNSDNSVKRLKGDKRPIVSEKDRAFLLASLSCVDYVVVFEEDTPIKLIQALKPDILVKGADYLNKEVIGSEFAKETCLMEFEEGYSTSAIIEKIKRTHND.

The segment at 1 to 311 (MKKILVVGDL…EEIALILNQT (311 aa)) is ribokinase. Residue 191–194 (NRAE) coordinates ATP. Aspartate 260 is a catalytic residue. The segment at 332-461 (FTNGCFDLLH…IEKIKRTHND (130 aa)) is cytidylyltransferase.

It in the N-terminal section; belongs to the carbohydrate kinase PfkB family. In the C-terminal section; belongs to the cytidylyltransferase family. As to quaternary structure, homodimer.

It catalyses the reaction D-glycero-beta-D-manno-heptose 7-phosphate + ATP = D-glycero-beta-D-manno-heptose 1,7-bisphosphate + ADP + H(+). The catalysed reaction is D-glycero-beta-D-manno-heptose 1-phosphate + ATP + H(+) = ADP-D-glycero-beta-D-manno-heptose + diphosphate. The protein operates within nucleotide-sugar biosynthesis; ADP-L-glycero-beta-D-manno-heptose biosynthesis; ADP-L-glycero-beta-D-manno-heptose from D-glycero-beta-D-manno-heptose 7-phosphate: step 1/4. Its pathway is nucleotide-sugar biosynthesis; ADP-L-glycero-beta-D-manno-heptose biosynthesis; ADP-L-glycero-beta-D-manno-heptose from D-glycero-beta-D-manno-heptose 7-phosphate: step 3/4. Its function is as follows. Catalyzes the phosphorylation of D-glycero-D-manno-heptose 7-phosphate at the C-1 position to selectively form D-glycero-beta-D-manno-heptose-1,7-bisphosphate. In terms of biological role, catalyzes the ADP transfer from ATP to D-glycero-beta-D-manno-heptose 1-phosphate, yielding ADP-D-glycero-beta-D-manno-heptose. This chain is Bifunctional protein HldE, found in Helicobacter pylori (strain P12).